The primary structure comprises 511 residues: GMP synthase [glutamine-hydrolyzing] (511 aa).

In terms of domain architecture, Glutamine amidotransferase type-1 spans 5–195 (DILVLDFGSQ…AKYACNCESV (191 aa)). Residue cysteine 82 is the Nucleophile of the active site. Active-site residues include histidine 169 and glutamate 171. The GMPS ATP-PPase domain occupies 196 to 386 (WNMGSFAKTQ…LGLSKEVVYR (191 aa)). 223 to 229 (SGGVDSS) contributes to the ATP binding site.

In terms of assembly, homodimer.

It catalyses the reaction XMP + L-glutamine + ATP + H2O = GMP + L-glutamate + AMP + diphosphate + 2 H(+). The protein operates within purine metabolism; GMP biosynthesis; GMP from XMP (L-Gln route): step 1/1. Functionally, catalyzes the synthesis of GMP from XMP. In Campylobacter jejuni subsp. doylei (strain ATCC BAA-1458 / RM4099 / 269.97), this protein is GMP synthase [glutamine-hydrolyzing].